Consider the following 627-residue polypeptide: Glucokinase regulatory protein (627 aa).

SIS domains are found at residues 90 to 286 (VQEV…QGVV) and 320 to 499 (VGIS…LLGK). Residues 109–110 (TS), glutamate 153, and 179–181 (SVG) contribute to the beta-D-fructose 1-phosphate site. 109-110 (TS) serves as a coordination point for beta-D-fructose 6-phosphate. 179–181 (SVG) provides a ligand contact to beta-D-fructose 6-phosphate. The tract at residues 199 to 200 (AV) is important for interaction with GCK. Glutamate 348 contributes to the beta-D-fructose 1-phosphate binding site. An essential for interaction with GCK region spans residues 463–465 (LLF). Beta-D-fructose 1-phosphate is bound at residue lysine 514. Lysine 514 contributes to the beta-D-fructose 6-phosphate binding site.

It belongs to the GCKR family. In terms of assembly, interacts (fructose 6-phosphate bound form) with GCK. Detected in liver (at protein level). Not detected in muscle, brain, heart, testis, intestine or spleen.

Its subcellular location is the cytoplasm. It is found in the nucleus. The protein localises to the mitochondrion. Functionally, regulates glucokinase (GCK) by forming an inactive complex with this enzyme. Acts by promoting GCK recruitment to the nucleus, possibly to provide a reserve of GCK that can be quickly released in the cytoplasm after a meal. The affinity of GCKR for GCK is modulated by fructose metabolites: GCKR with bound fructose 6-phosphate has increased affinity for GCK, while GCKR with bound fructose 1-phosphate has strongly decreased affinity for GCK and does not inhibit GCK activity. This Rattus norvegicus (Rat) protein is Glucokinase regulatory protein.